The following is a 468-amino-acid chain: Phenylalanine--tRNA ligase alpha subunit (468 aa).

Residues Thr-311, 350–352 (QLD), and Phe-390 each bind L-phenylalanine. Position 392 (Glu-392) interacts with Mg(2+).

It belongs to the class-II aminoacyl-tRNA synthetase family. Phe-tRNA synthetase alpha subunit type 2 subfamily. As to quaternary structure, tetramer of two alpha and two beta subunits. It depends on Mg(2+) as a cofactor.

The protein resides in the cytoplasm. The catalysed reaction is tRNA(Phe) + L-phenylalanine + ATP = L-phenylalanyl-tRNA(Phe) + AMP + diphosphate + H(+). This chain is Phenylalanine--tRNA ligase alpha subunit, found in Saccharolobus solfataricus (strain ATCC 35092 / DSM 1617 / JCM 11322 / P2) (Sulfolobus solfataricus).